A 112-amino-acid polypeptide reads, in one-letter code: uncharacterized protein (112 aa).

Positions 1-21 are cleaved as a signal peptide; sequence MKTLFTSVVLCGALVVSSSFA. HhH domains follow at residues 49–79 and 80–109; these read DKLNINTATASEIQKSLTGIGAKKAEAIVQY and REKHGNFXNAEQLLEVQGIGKATLEKNRDR.

This is an uncharacterized protein from Haemophilus influenzae (strain ATCC 51907 / DSM 11121 / KW20 / Rd).